The primary structure comprises 174 residues: Probable nicotinate-nucleotide adenylyltransferase (174 aa).

This sequence belongs to the NadD family.

The catalysed reaction is nicotinate beta-D-ribonucleotide + ATP + H(+) = deamido-NAD(+) + diphosphate. It functions in the pathway cofactor biosynthesis; NAD(+) biosynthesis; deamido-NAD(+) from nicotinate D-ribonucleotide: step 1/1. Catalyzes the reversible adenylation of nicotinate mononucleotide (NaMN) to nicotinic acid adenine dinucleotide (NaAD). The sequence is that of Probable nicotinate-nucleotide adenylyltransferase from Helicobacter pylori (strain HPAG1).